Consider the following 389-residue polypeptide: Innexin-6 (389 aa).

Transmembrane regions (helical) follow at residues 36–56 (VVIL…GDPI), 111–131 (VFAL…AMIA), 190–210 (LFYT…FYIL), and 276–296 (LFIF…VNCF).

Belongs to the pannexin family.

The protein localises to the cell membrane. It is found in the cell junction. Its subcellular location is the gap junction. In terms of biological role, structural component of the gap junctions. The chain is Innexin-6 (inx-6) from Caenorhabditis elegans.